A 212-amino-acid chain; its full sequence is Pyrrolidone-carboxylate peptidase (212 aa).

Residues Glu-78, Cys-141, and His-165 contribute to the active site.

It belongs to the peptidase C15 family. As to quaternary structure, homotetramer.

Its subcellular location is the cytoplasm. The enzyme catalyses Release of an N-terminal pyroglutamyl group from a polypeptide, the second amino acid generally not being Pro.. Removes 5-oxoproline from various penultimate amino acid residues except L-proline. The chain is Pyrrolidone-carboxylate peptidase from Staphylococcus aureus (strain bovine RF122 / ET3-1).